Consider the following 297-residue polypeptide: Nucleotide-binding protein Bxeno_A0336 (297 aa).

Residue 8 to 15 participates in ATP binding; that stretch reads GISGSGKS. 57–60 contacts GTP; the sequence is DARS.

It belongs to the RapZ-like family.

Displays ATPase and GTPase activities. This Paraburkholderia xenovorans (strain LB400) protein is Nucleotide-binding protein Bxeno_A0336.